A 414-amino-acid chain; its full sequence is ORC1-type DNA replication protein 11 (414 aa).

ATP is bound by residues 60-64, Y207, and R219; that span reads VGKTA.

It belongs to the CDC6/cdc18 family.

In terms of biological role, involved in regulation of DNA replication. This Haloarcula marismortui (strain ATCC 43049 / DSM 3752 / JCM 8966 / VKM B-1809) (Halobacterium marismortui) protein is ORC1-type DNA replication protein 11 (cdc6k).